Here is a 756-residue protein sequence, read N- to C-terminus: Xylosyl- and glucuronyltransferase LARGE1 (756 aa).

Topologically, residues 1–10 are cytoplasmic; it reads MLGICRGRRK. Residues 11 to 31 traverse the membrane as a helical; Signal-anchor for type II membrane protein segment; sequence FLAASLSLLCIPAITWIYLFS. Topologically, residues 32–756 are lumenal; that stretch reads GSFEDGKPVS…LKYLTAENNS (725 aa). Disordered regions lie at residues 43 to 69 and 81 to 109; these read SPLESQAHSPRYTASSQRERESLEVRM and RQLSLAQGRAPSHRRGNHSKTYSMEEGTG. A compositionally biased stretch (polar residues) spans 44 to 58; sequence PLESQAHSPRYTASS. Positions 53–95 form a coiled coil; sequence RYTASSQRERESLEVRMREVEEENRALRRQLSLAQGRAPSHRR. Residues 59-69 show a composition bias toward basic and acidic residues; sequence QRERESLEVRM. Residues Asn-97, Asn-122, and Asn-148 are each glycosylated (N-linked (GlcNAc...) asparagine). The interval 138-413 is xylosyltransferase activity; sequence IHVAIVCAGY…FLEYDGNLLR (276 aa). The Mn(2+) site is built by Asp-242 and Asp-244. Asn-272 is a glycosylation site (N-linked (GlcNAc...) asparagine). Residues 414–756 form a glucuronyltransferase activity region; it reads RELFGCPSEA…LKYLTAENNS (343 aa). Mn(2+)-binding residues include Asp-563 and Asp-565.

It in the C-terminal section; belongs to the glycosyltransferase 49 family. The protein in the N-terminal section; belongs to the glycosyltransferase 8 family. As to quaternary structure, interacts with DAG1 (via the N-terminal domain of alpha-DAG1); the interaction increases binding of DAG1 to laminin. Interacts with B4GAT1. Mn(2+) is required as a cofactor. As to expression, ubiquitous. Highest expression in heart, brain and skeletal muscle.

The protein resides in the golgi apparatus membrane. It catalyses the reaction 3-O-[beta-D-GlcA-(1-&gt;3)-beta-D-Xyl-(1-&gt;4)-Rib-ol-P-Rib-ol-P-3-beta-D-GalNAc-(1-&gt;3)-beta-D-GlcNAc-(1-&gt;4)-(O-6-P-alpha-D-Man)]-Thr-[protein] + UDP-alpha-D-xylose = 3-O-[alpha-D-Xyl-(1-&gt;3)-beta-D-GlcA-(1-&gt;4)-beta-D-Xyl-(1-&gt;4)-Rib-ol-P-Rib-ol-P-3-beta-D-GalNAc-(1-&gt;3)-beta-D-GlcNAc-(1-&gt;4)-(O-6-P-alpha-D-Man)]-Thr-[protein] + UDP + H(+). The catalysed reaction is 3-O-{(1-&gt;[3)-alpha-D-Xyl-(1-&gt;3)-beta-D-GlcA-(1-&gt;](n)-4)-beta-D-Xyl-(1-&gt;4)-Rib-ol-P-Rib-ol-P-3-beta-D-GalNAc-(1-&gt;3)-beta-D-GlcNAc-(1-&gt;4)-O-6-P-alpha-D-Man}-L-Thr-[protein] + UDP-alpha-D-glucuronate = 3-O-{beta-D-GlcA-(1-&gt;[3)-alpha-D-Xyl-(1-&gt;3)-beta-D-GlcA-(1-&gt;](n)-4)-beta-D-Xyl-(1-&gt;4)-Rib-ol-P-Rib-ol-P-3-beta-D-GalNAc-(1-&gt;3)-beta-D-GlcNAc-(1-&gt;4)-O-6-P-alpha-D-Man}-L-Thr-[protein] + UDP + H(+). The enzyme catalyses 3-O-{beta-D-GlcA-(1-&gt;[3)-alpha-D-Xyl-(1-&gt;3)-beta-D-GlcA-(1-&gt;](n)-4)-beta-D-Xyl-(1-&gt;4)-Rib-ol-P-Rib-ol-P-3-beta-D-GalNAc-(1-&gt;3)-beta-D-GlcNAc-(1-&gt;4)-O-6-P-alpha-D-Man}-L-Thr-[protein] + UDP-alpha-D-xylose = 3-O-{(1-&gt;[3)-alpha-D-Xyl-(1-&gt;3)-beta-D-GlcA-(1-&gt;](n+1)-4)-beta-D-Xyl-(1-&gt;4)-Rib-ol-P-Rib-ol-P-3-beta-D-GalNAc-(1-&gt;3)-beta-D-GlcNAc-(1-&gt;4)-O-6-P-alpha-D-Man}-L-Thr-[protein] + UDP + H(+). It functions in the pathway protein modification; protein glycosylation. Functionally, bifunctional glycosyltransferase with both alpha-1,3-xylosyltransferase and beta-1,3-glucuronyltransferase activities involved in the maturation of alpha-dystroglycan (DAG1) by glycosylation leading to DAG1 binding to laminin G-like domain-containing extracellular proteins with high affinity. Elongates the glucuronyl-beta-1,4-xylose-beta disaccharide primer structure initiated by B4GAT1 by adding repeating units [-3-Xylose-alpha-1,3-GlcA-beta-1-] to produce a heteropolysaccharide. Requires the phosphorylation of core M3 (O-mannosyl trisaccharide) by POMK to elongate the glucuronyl-beta-1,4-xylose-beta disaccharide primer. Plays a key role in skeletal muscle function and regeneration. The polypeptide is Xylosyl- and glucuronyltransferase LARGE1 (Homo sapiens (Human)).